Consider the following 131-residue polypeptide: Global transcriptional regulator Spx 1 (131 aa).

Cysteines 10 and 13 form a disulfide.

This sequence belongs to the ArsC family. Spx subfamily. As to quaternary structure, interacts with the C-terminal domain of the alpha subunit of the RNAP.

It is found in the cytoplasm. Functionally, global transcriptional regulator that plays a key role in stress response and exerts either positive or negative regulation of genes. Acts by interacting with the C-terminal domain of the alpha subunit of the RNA polymerase (RNAP). This interaction can enhance binding of RNAP to the promoter region of target genes and stimulate their transcription, or block interaction of RNAP with activator. The protein is Global transcriptional regulator Spx 1 of Oceanobacillus iheyensis (strain DSM 14371 / CIP 107618 / JCM 11309 / KCTC 3954 / HTE831).